Reading from the N-terminus, the 229-residue chain is 7-cyano-7-deazaguanine synthase (229 aa).

14-24 (LSGGQDSTTCL) is an ATP binding site. Residues cysteine 192, cysteine 200, cysteine 203, and cysteine 206 each contribute to the Zn(2+) site.

It belongs to the QueC family. Requires Zn(2+) as cofactor.

The catalysed reaction is 7-carboxy-7-deazaguanine + NH4(+) + ATP = 7-cyano-7-deazaguanine + ADP + phosphate + H2O + H(+). It participates in purine metabolism; 7-cyano-7-deazaguanine biosynthesis. Its function is as follows. Catalyzes the ATP-dependent conversion of 7-carboxy-7-deazaguanine (CDG) to 7-cyano-7-deazaguanine (preQ(0)). This Laribacter hongkongensis (strain HLHK9) protein is 7-cyano-7-deazaguanine synthase.